The sequence spans 26 residues: ATP synthase subunit gamma, mitochondrial (26 aa).

Belongs to the ATPase gamma chain family. F-type ATPases have 2 components, CF(1) - the catalytic core - and CF(0) - the membrane proton channel. CF(1) has five subunits: alpha(3), beta(3), gamma(1), delta(1), epsilon(1). CF(0) has three main subunits: a, b and c.

Its subcellular location is the mitochondrion. It is found in the mitochondrion inner membrane. Mitochondrial membrane ATP synthase (F(1)F(0) ATP synthase or Complex V) produces ATP from ADP in the presence of a proton gradient across the membrane which is generated by electron transport complexes of the respiratory chain. F-type ATPases consist of two structural domains, F(1) - containing the extramembraneous catalytic core, and F(0) - containing the membrane proton channel, linked together by a central stalk and a peripheral stalk. During catalysis, ATP synthesis in the catalytic domain of F(1) is coupled via a rotary mechanism of the central stalk subunits to proton translocation. Part of the complex F(1) domain and the central stalk which is part of the complex rotary element. The gamma subunit protrudes into the catalytic domain formed of alpha(3)beta(3). Rotation of the central stalk against the surrounding alpha(3)beta(3) subunits leads to hydrolysis of ATP in three separate catalytic sites on the beta subunits. The protein is ATP synthase subunit gamma, mitochondrial (ATPC) of Spinacia oleracea (Spinach).